The chain runs to 233 residues: Large ribosomal subunit protein uL1 (233 aa).

Belongs to the universal ribosomal protein uL1 family. In terms of assembly, part of the 50S ribosomal subunit.

Functionally, binds directly to 23S rRNA. The L1 stalk is quite mobile in the ribosome, and is involved in E site tRNA release. In terms of biological role, protein L1 is also a translational repressor protein, it controls the translation of the L11 operon by binding to its mRNA. The protein is Large ribosomal subunit protein uL1 of Shewanella woodyi (strain ATCC 51908 / MS32).